Reading from the N-terminus, the 219-residue chain is Acetylxylan esterase (219 aa).

The Nucleophile role is filled by Ser15. Residues Asp191 and His194 each act as charge relay system in the active site.

The protein belongs to the 'GDSL' lipolytic enzyme family. In terms of assembly, homooctamer, presenting a unique donut-shaped quaternary structure built of two staggered tetrameric rings. The eight active sites are organized in four closely situated pairs, which face the relatively wide internal cavity.

It is found in the cytoplasm. The catalysed reaction is Deacetylation of xylans and xylo-oligosaccharides.. It functions in the pathway glycan degradation; xylan degradation. In terms of biological role, acetylxylan esterase involved in the degradation of xylan, a major structural heterogeneous polysaccharide found in plant biomass representing the second most abundant polysaccharide in the biosphere, after cellulose. Cleaves acetyl side groups from the xylose backbone units of the hemicellulolytic polymer xylan and xylo-oligosaccharides. Hydrolyzes about 20%-30% of the available acetyl groups on fully acetylated birch wood xylan. Completely deacetylates xylobiose peracetate (fully acetylated), and is active on both the alpha- and beta-forms of the sugar. Also hydrolyzes fully acetylated methyl-beta-D-xylopyranoside and methyl-beta-D-glucopyranoside, and the synthetic substrates 2-naphthyl acetate, 4-nitrophenyl acetate, 4-methylumbelliferyl acetate, and phenyl acetate. The protein is Acetylxylan esterase of Geobacillus stearothermophilus (Bacillus stearothermophilus).